The following is a 591-amino-acid chain: CTP synthase (591 aa).

Positions 1 to 281 (MPQSRTHSRT…DAYVVRQLGL (281 aa)) are amidoligase domain. Position 23 (Ser23) interacts with CTP. Ser23 is a UTP binding site. ATP-binding positions include 24–29 (SLGKGL) and Asp81. 2 residues coordinate Mg(2+): Asp81 and Glu155. CTP-binding positions include 162–164 (DIE), 202–207 (KTKPTQ), and Lys238. UTP is bound by residues 202–207 (KTKPTQ) and Lys238. Residues 306-554 (RIALVGKYVD…VDAALKHKLE (249 aa)) form the Glutamine amidotransferase type-1 domain. Gly369 lines the L-glutamine pocket. Cys396 acts as the Nucleophile; for glutamine hydrolysis in catalysis. Residues 397–400 (LGLQ), Glu419, and Arg480 contribute to the L-glutamine site. Catalysis depends on residues His527 and Glu529. Residues 568-591 (AVATDDELADSADRDEVASVDSAG) are disordered.

This sequence belongs to the CTP synthase family. In terms of assembly, homotetramer.

It catalyses the reaction UTP + L-glutamine + ATP + H2O = CTP + L-glutamate + ADP + phosphate + 2 H(+). The catalysed reaction is L-glutamine + H2O = L-glutamate + NH4(+). It carries out the reaction UTP + NH4(+) + ATP = CTP + ADP + phosphate + 2 H(+). Its pathway is pyrimidine metabolism; CTP biosynthesis via de novo pathway; CTP from UDP: step 2/2. With respect to regulation, allosterically activated by GTP, when glutamine is the substrate; GTP has no effect on the reaction when ammonia is the substrate. The allosteric effector GTP functions by stabilizing the protein conformation that binds the tetrahedral intermediate(s) formed during glutamine hydrolysis. Inhibited by the product CTP, via allosteric rather than competitive inhibition. Its function is as follows. Catalyzes the ATP-dependent amination of UTP to CTP with either L-glutamine or ammonia as the source of nitrogen. Regulates intracellular CTP levels through interactions with the four ribonucleotide triphosphates. The protein is CTP synthase of Rhodococcus jostii (strain RHA1).